Reading from the N-terminus, the 258-residue chain is Phycoerythrobilin:ferredoxin oxidoreductase (258 aa).

Belongs to the HY2 family.

It catalyses the reaction (3Z)-phycoerythrobilin + oxidized 2[4Fe-4S]-[ferredoxin] = 15,16-dihydrobiliverdin + reduced 2[4Fe-4S]-[ferredoxin] + 2 H(+). Catalyzes the two-electron reduction of the C2 and C3(1) diene system of 15,16-dihydrobiliverdin. This chain is Phycoerythrobilin:ferredoxin oxidoreductase, found in Prochlorococcus marinus (strain NATL1A).